An 874-amino-acid chain; its full sequence is MAQTVRECSLALLFLFMWLLIKANIDVCKLGTVTVQPAPVIPLGSAANISCSLNPKQGCSHYPSSNELILLKFVNDVLVENLHGKKVHDHTGHSSTFQVTNLSLGMTLFVCKLNCSNSQKKPPVPVCGVEISVGVAPEPPQNISCVQEGENGTVACSWNSGKVTYLKTNYTLQLSGPNNLTCQKQCFSDNRQNCNRLDLGINLSPDLAESRFIVRVTAINDLGNSSSLPHTFTFLDIVIPLPPWDIRINFLNASGSRGTLQWEDEGQVVLNQLRYQPLNSTSWNMVNATNAKGKYDLRDLRPFTEYEFQISSKLHLSGGSWSNWSESLRTRTPEEEPVGILDIWYMKQDIDYDRQQISLFWKSLNPSEARGKILHYQVTLQEVTKKTTLQNTTRHTSWTRVIPRTGAWTASVSAANSKGASAPTHINIVDLCGTGLLAPHQVSAKSENMDNILVTWQPPKKADSAVREYIVEWRALQPGSITKFPPHWLRIPPDNMSALISENIKPYICYEIRVHALSESQGGCSSIRGDSKHKAPVSGPHITAITEKKERLFISWTHIPFPEQRGCILHYRIYWKERDSTAQPELCEIQYRRSQNSHPISSLQPRVTYVLWMTAVTAAGESPQGNEREFCPQGKANWKAFVISSICIAIITVGTFSIRYFRQKAFTLLSTLKPQWYSRTIPDPANSTWVKKYPILEEKIQLPTDNLLMAWPTPEEPEPLIIHEVLYHMIPVVRQPYYFKRGQGFQGYSTSKQDAMYIANPQATGTLTAETRQLVNLYKVLESRDPDSKLANLTSPLTVTPVNYLPSHEGYLPSNIEDLSPHEADPTDSFDLEHQHISLSIFASSSLRPLIFGGERLTLDRLKMGYDSLMSNEA.

A signal peptide spans 1 to 23; it reads MAQTVRECSLALLFLFMWLLIKA. Topologically, residues 24 to 637 are extracellular; it reads NIDVCKLGTV…REFCPQGKAN (614 aa). N-linked (GlcNAc...) asparagine glycosylation is found at Asn48, Asn101, Asn114, Asn142, Asn151, Asn169, Asn179, Asn224, Asn252, Asn279, Asn287, Asn323, Asn391, and Asn495. 5 Fibronectin type-III domains span residues 139 to 237, 242 to 335, 336 to 430, 438 to 530, and 536 to 635; these read PPQN…FLDI, PPWD…TPEE, EPVG…NIVD, APHQ…IRGD, and PVSG…PQGK. The WSXWS motif signature appears at 321–325; that stretch reads WSNWS. A helical transmembrane segment spans residues 638–658; that stretch reads WKAFVISSICIAIITVGTFSI. The Cytoplasmic segment spans residues 659-874; sequence RYFRQKAFTL…GYDSLMSNEA (216 aa). Residues 677–685 carry the Box 1 motif motif; the sequence is YSRTIPDPA. A phosphotyrosine mark is found at Tyr757, Tyr804, and Tyr811.

This sequence belongs to the type I cytokine receptor family. Type 2 subfamily. As to quaternary structure, heterodimer/heterooligomer; disulfide-linked. The functional high affinity IL12 receptor is composed of I12RB1 and IL12RB2. Il12RB2 binds JAK2 (via its N-terminal) through a membrane-proximal region of the cytoplasmic domain. In terms of processing, on IL12 stimulation, phosphorylated on C-terminal tyrosine residues. Phosphorylation of any one of Tyr-757, Tyr-804 or Tyr-811 can activate STAT4, IFN-gamma production, and T-cell proliferation. Tyr-811 is the dominant site of cell proliferation. Expressed in developing T-helper (TH) cells.

The protein resides in the membrane. In terms of biological role, receptor for interleukin-12. This subunit is the signaling component coupling to the JAK2/STAT4 pathway. Promotes the proliferation of T-cells as well as NK cells. Induces the promotion of T-cells towards the Th1 phenotype by strongly enhancing IFN-gamma production. Can also activate STAT3. This chain is Interleukin-12 receptor subunit beta-2 (Il12rb2), found in Mus musculus (Mouse).